Here is a 158-residue protein sequence, read N- to C-terminus: 6,7-dimethyl-8-ribityllumazine synthase (158 aa).

5-amino-6-(D-ribitylamino)uracil contacts are provided by residues Phe24, 58–60, and 82–84; these read AFE and AVI. Residue 87–88 participates in (2S)-2-hydroxy-3-oxobutyl phosphate binding; that stretch reads GT. His90 functions as the Proton donor in the catalytic mechanism. Phe115 provides a ligand contact to 5-amino-6-(D-ribitylamino)uracil. (2S)-2-hydroxy-3-oxobutyl phosphate is bound at residue Arg129.

Belongs to the DMRL synthase family. In terms of assembly, forms an icosahedral capsid composed of 60 subunits, arranged as a dodecamer of pentamers.

The enzyme catalyses (2S)-2-hydroxy-3-oxobutyl phosphate + 5-amino-6-(D-ribitylamino)uracil = 6,7-dimethyl-8-(1-D-ribityl)lumazine + phosphate + 2 H2O + H(+). Its pathway is cofactor biosynthesis; riboflavin biosynthesis; riboflavin from 2-hydroxy-3-oxobutyl phosphate and 5-amino-6-(D-ribitylamino)uracil: step 1/2. In terms of biological role, catalyzes the formation of 6,7-dimethyl-8-ribityllumazine by condensation of 5-amino-6-(D-ribitylamino)uracil with 3,4-dihydroxy-2-butanone 4-phosphate. This is the penultimate step in the biosynthesis of riboflavin. The sequence is that of 6,7-dimethyl-8-ribityllumazine synthase from Pseudomonas paraeruginosa (strain DSM 24068 / PA7) (Pseudomonas aeruginosa (strain PA7)).